A 109-amino-acid polypeptide reads, in one-letter code: uncharacterized protein (109 aa).

This is an uncharacterized protein from Treponema pallidum (strain Nichols).